The following is a 519-amino-acid chain: MIOREX complex component 12 (519 aa).

The N-terminal 35 residues, 1-35 (MLRSLHSAATLSNKRFYSLISHSNRKNIIKKLLRH), are a transit peptide targeting the mitochondrion.

Associates with the mitochondrial ribosome.

The protein localises to the mitochondrion. Component of MIOREX complexes, large expressome-like assemblies of ribosomes with factors involved in all the steps of post-transcriptional gene expression. This chain is MIOREX complex component 12, found in Saccharomyces cerevisiae (strain ATCC 204508 / S288c) (Baker's yeast).